The primary structure comprises 231 residues: Lecithin retinol acyltransferase (231 aa).

Over 1 to 194 (MKNPMLEAAS…VKIIIRDQRS (194 aa)) the chain is Cytoplasmic. An LRAT domain is found at 50 to 177 (VLEVSRTHFI…CRYGSRISPQ (128 aa)). Active-site residues include histidine 60 and histidine 72. Cysteine 161 acts as the Acyl-thioester intermediate in catalysis. The helical transmembrane segment at 195–215 (SLASAVLGLASIVYTGLASYM) threads the bilayer. The Lumenal segment spans residues 216-231 (TLPAICIPFCLWMMSG).

It belongs to the H-rev107 family. In terms of tissue distribution, hepatic stellate cells and endothelial cells (at protein level).

Its subcellular location is the endoplasmic reticulum membrane. The protein localises to the rough endoplasmic reticulum. It is found in the endosome. The protein resides in the multivesicular body. It localises to the cytoplasm. Its subcellular location is the perinuclear region. The catalysed reaction is all-trans-retinol--[retinol-binding protein] + a 1,2-diacyl-sn-glycero-3-phosphocholine = apo--[retinol-binding protein] + an all-trans-retinyl ester + a 2-acyl-sn-glycero-3-phosphocholine. It catalyses the reaction 1,2-diheptanoyl-sn-glycero-3-phosphocholine + all-trans-retinol--[retinol-binding protein] = all-trans-retinyl heptanoate + 2-heptanoyl-sn-glycero-3-phosphocholine + apo--[retinol-binding protein]. The enzyme catalyses 1,2-dioctanoyl-sn-glycero-3-phosphocholine + all-trans-retinol--[retinol-binding protein] = 2-octanoyl-sn-glycero-3-phosphocholine + all-trans-retinyl octanoate + apo--[retinol-binding protein]. It carries out the reaction all-trans-retinol--[retinol-binding protein] + 1,2-dihexadecanoyl-sn-glycero-3-phosphocholine = apo--[retinol-binding protein] + all-trans-retinyl hexadecanoate + 2-hexadecanoyl-sn-glycero-3-phosphocholine. The catalysed reaction is 1,2-didodecanoyl-sn-glycero-3-phosphocholine + all-trans-retinol--[retinol-binding protein] = 2-dodecanoyl-sn-glycero-3-phosphocholine + all-trans-retinyl dodecanoate + apo--[retinol-binding protein]. It catalyses the reaction 1,2-dihexadecanoyl-sn-glycero-3-phosphocholine + all-trans-retinol = all-trans-retinyl hexadecanoate + 2-hexadecanoyl-sn-glycero-3-phosphocholine. It participates in cofactor metabolism; retinol metabolism. Its activity is regulated as follows. Inhibited by all-trans-retinyl alpha-bromoacetate and N-boc-L-biocytinyl-11-aminoundecane chloro-methyl ketone (BACMK). Its function is as follows. Transfers the acyl group from the sn-1 position of phosphatidylcholine to all-trans retinol, producing all-trans retinyl esters. Retinyl esters are storage forms of vitamin A. LRAT plays a critical role in vision. It provides the all-trans retinyl ester substrates for the isomerohydrolase which processes the esters into 11-cis-retinol in the retinal pigment epithelium; due to a membrane-associated alcohol dehydrogenase, 11 cis-retinol is oxidized and converted into 11-cis-retinaldehyde which is the chromophore for rhodopsin and the cone photopigments. Required for the survival of cone photoreceptors and correct rod photoreceptor cell morphology. The sequence is that of Lecithin retinol acyltransferase (Lrat) from Mus musculus (Mouse).